The chain runs to 280 residues: MATTIKFTKMQGTGNDYIYVNTLSSPLQDPIKAARKWSTYHTGIGADGLVLIGASEKADFSMRIFNADGSEAMMCGNASRCIGKYVYEKGLTDKEVITLETLSGIKILKLHTGNGVVKDVTVDMGTPLLSNPGQIATKTGGMLAETIPADGKEYKGTFVCMGNPHVVIFVDDIKEVDLPAVGPKLENHPLFPERTNVEFVEILPDQSLRMRVWERGSGITMACGTGACATAVAAVLNHKAGRKSWVRMDGGDLHIHWNEKDGHVYMTGPAGKVFEGEIEM.

Substrate is bound by residues N15 and N66. The active-site Proton donor is the C75. Substrate contacts are provided by residues 76–77 (GN), N163, N196, and 214–215 (ER). C223 serves as the catalytic Proton acceptor. 224–225 (GT) contacts substrate.

The protein belongs to the diaminopimelate epimerase family. Homodimer.

It localises to the cytoplasm. The catalysed reaction is (2S,6S)-2,6-diaminopimelate = meso-2,6-diaminopimelate. Its pathway is amino-acid biosynthesis; L-lysine biosynthesis via DAP pathway; DL-2,6-diaminopimelate from LL-2,6-diaminopimelate: step 1/1. In terms of biological role, catalyzes the stereoinversion of LL-2,6-diaminopimelate (L,L-DAP) to meso-diaminopimelate (meso-DAP), a precursor of L-lysine and an essential component of the bacterial peptidoglycan. In Phocaeicola vulgatus (strain ATCC 8482 / DSM 1447 / JCM 5826 / CCUG 4940 / NBRC 14291 / NCTC 11154) (Bacteroides vulgatus), this protein is Diaminopimelate epimerase.